A 1179-amino-acid chain; its full sequence is Serine/threonine-protein kinase pakG (1179 aa).

Residues 12–53 (SKTNEDIELIKQKLKEDRELLEKERAQFEEERKIIFESLNKV) are a coiled coil. The CRIB domain maps to 111–124 (IGTPFNVQHKVHVD). Residues 139 to 390 (FLIDCILGTG…AIELLTHPFL (252 aa)) form the Protein kinase domain. ATP contacts are provided by residues 145 to 153 (LGTGSYGTV) and lysine 168. Residue aspartate 257 is the Proton acceptor of the active site. Disordered regions lie at residues 414 to 469 (KKKK…SSLD), 589 to 631 (IGNS…NNNN), 705 to 1086 (SSSS…PITL), and 1121 to 1179 (TEIN…SPKK). Residues 621–668 (NNNNNNNNNNNEFLINQIKKELILDFNENMKQYINQQLTNLKEEMLKE) adopt a coiled-coil conformation. 2 stretches are compositionally biased toward low complexity: residues 705–723 (SSSS…SNSS) and 743–761 (LPPS…TSSP). Residues 762 to 776 (SPSPSPSPSPSPSSP) are compositionally biased toward pro residues. Composition is skewed to low complexity over residues 777-788 (LPSSSTSTVNTP) and 812-833 (NNNN…NNNN). Residues 834–857 (VIQSPKLNNRPLSPTTPTKQFNNR) show a composition bias toward polar residues. A compositionally biased stretch (low complexity) spans 864–891 (FNNRPPSPSKFNNRPPSPSNRPLSPKNS). The span at 892-946 (YNSLEKSNNGSISNNRPLSPKNSLEKSTTQNNTSSEDISTTTVTVTSEQGGTPIT) shows a compositional bias: polar residues. Residues 954–963 (RPKPSPPPIP) show a composition bias toward pro residues. 3 stretches are compositionally biased toward low complexity: residues 964–997 (MNKS…TIAA), 1024–1046 (TTIT…SPNS), and 1053–1077 (ITTS…SSSN). Over residues 1121–1135 (TEINLPSSSPSTPQK) the composition is skewed to polar residues. Residues 1137-1158 (NTPSSIPTTPTTPTTNGGSVSS) are compositionally biased toward low complexity.

The protein belongs to the protein kinase superfamily. STE Ser/Thr protein kinase family. STE20 subfamily. Mg(2+) serves as cofactor.

It catalyses the reaction L-seryl-[protein] + ATP = O-phospho-L-seryl-[protein] + ADP + H(+). The enzyme catalyses L-threonyl-[protein] + ATP = O-phospho-L-threonyl-[protein] + ADP + H(+). The chain is Serine/threonine-protein kinase pakG from Dictyostelium discoideum (Social amoeba).